A 188-amino-acid polypeptide reads, in one-letter code: Probable nicotinate-nucleotide adenylyltransferase (188 aa).

It belongs to the NadD family.

The enzyme catalyses nicotinate beta-D-ribonucleotide + ATP + H(+) = deamido-NAD(+) + diphosphate. Its pathway is cofactor biosynthesis; NAD(+) biosynthesis; deamido-NAD(+) from nicotinate D-ribonucleotide: step 1/1. In terms of biological role, catalyzes the reversible adenylation of nicotinate mononucleotide (NaMN) to nicotinic acid adenine dinucleotide (NaAD). The polypeptide is Probable nicotinate-nucleotide adenylyltransferase (Salinispora arenicola (strain CNS-205)).